A 134-amino-acid polypeptide reads, in one-letter code: UPF0412 protein YaaI (134 aa).

An N-terminal signal peptide occupies residues 1–23 (MKSVFTISASLAISLMLCCTAQA).

This sequence belongs to the UPF0412 family.

This is UPF0412 protein YaaI from Escherichia coli (strain ATCC 8739 / DSM 1576 / NBRC 3972 / NCIMB 8545 / WDCM 00012 / Crooks).